A 96-amino-acid chain; its full sequence is Defensin-like protein 69 (96 aa).

The signal sequence occupies residues 1-19 (MGSSKLLVAFTLIVMMTIS). Cystine bridges form between Cys-37-Cys-86, Cys-41-Cys-64, Cys-50-Cys-84, and Cys-54-Cys-85.

This sequence belongs to the DEFL family.

It localises to the secreted. In Arabidopsis thaliana (Mouse-ear cress), this protein is Defensin-like protein 69.